The sequence spans 865 residues: Bifunctional uridylyltransferase/uridylyl-removing enzyme (865 aa).

The interval 1–318 (MPHVDLNPLK…FPRPDSDARL (318 aa)) is uridylyltransferase. The segment at 319-675 (IDDDFRNLRE…VRPTEHGEGL (357 aa)) is uridylyl-removing. In terms of domain architecture, HD spans 437-559 (VDQHTLAVVR…VGDERRLAAL (123 aa)). 2 ACT domains span residues 676-762 (QVMV…RLPH) and 789-865 (RLSV…QQAA). The disordered stretch occupies residues 747-767 (DPHAARHAHAPRRLPHSHARR). Positions 751–767 (ARHAHAPRRLPHSHARR) are enriched in basic residues.

It belongs to the GlnD family. Mg(2+) is required as a cofactor.

The enzyme catalyses [protein-PII]-L-tyrosine + UTP = [protein-PII]-uridylyl-L-tyrosine + diphosphate. It catalyses the reaction [protein-PII]-uridylyl-L-tyrosine + H2O = [protein-PII]-L-tyrosine + UMP + H(+). Uridylyltransferase (UTase) activity is inhibited by glutamine, while glutamine activates uridylyl-removing (UR) activity. Its function is as follows. Modifies, by uridylylation and deuridylylation, the PII regulatory proteins (GlnB and homologs), in response to the nitrogen status of the cell that GlnD senses through the glutamine level. Under low glutamine levels, catalyzes the conversion of the PII proteins and UTP to PII-UMP and PPi, while under higher glutamine levels, GlnD hydrolyzes PII-UMP to PII and UMP (deuridylylation). Thus, controls uridylylation state and activity of the PII proteins, and plays an important role in the regulation of nitrogen assimilation and metabolism. The sequence is that of Bifunctional uridylyltransferase/uridylyl-removing enzyme from Bordetella parapertussis (strain 12822 / ATCC BAA-587 / NCTC 13253).